Reading from the N-terminus, the 345-residue chain is Isopentenyl-diphosphate delta-isomerase (345 aa).

Position 6–7 (6–7) interacts with substrate; the sequence is RK. Residues 63–65, S93, and N122 contribute to the FMN site; that span reads SMT. 93–95 serves as a coordination point for substrate; the sequence is SQR. Q156 is a substrate binding site. Position 157 (E157) interacts with Mg(2+). Residues K188, T218, 265 to 267, and 286 to 287 contribute to the FMN site; these read GLR and AL.

Belongs to the IPP isomerase type 2 family. As to quaternary structure, homooctamer. Dimer of tetramers. FMN serves as cofactor. NADPH is required as a cofactor. Requires Mg(2+) as cofactor.

It is found in the cytoplasm. The catalysed reaction is isopentenyl diphosphate = dimethylallyl diphosphate. In terms of biological role, involved in the biosynthesis of isoprenoids. Catalyzes the 1,3-allylic rearrangement of the homoallylic substrate isopentenyl (IPP) to its allylic isomer, dimethylallyl diphosphate (DMAPP). The chain is Isopentenyl-diphosphate delta-isomerase from Archaeoglobus fulgidus (strain ATCC 49558 / DSM 4304 / JCM 9628 / NBRC 100126 / VC-16).